The primary structure comprises 761 residues: Subtilisin-like protease SBT3 (761 aa).

The signal sequence occupies residues 1–22 (MELLHLLLFSWALSAHLFLALA). A propeptide spanning residues 23 to 112 (QRSTYIVHLD…AYKDRTVEPH (90 aa)) is cleaved from the precursor. The Inhibitor I9 domain maps to 26–110 (TYIVHLDKSL…ISAYKDRTVE (85 aa)). In terms of domain architecture, Peptidase S8 spans 116–606 (TSDFLKLNPS…AGHVDPNRAL (491 aa)). Residue D144 is the Charge relay system of the active site. C170 and C181 are joined by a disulfide. Residues N177 and N203 are each glycosylated (N-linked (GlcNAc...) (complex) asparagine; alternate). N177 and N203 each carry an N-linked (GlcNAc...) (paucimannose) asparagine; alternate glycan. The active-site Charge relay system is the H215. Residue N376 is glycosylated (N-linked (GlcNAc...) (paucimannose) asparagine; partial). Residues C382 and C401 are joined by a disulfide bond. S538 acts as the Charge relay system in catalysis. The disordered stretch occupies residues 574 to 598 (LDNTRKPIKDSDNNKAATPLDMGAG). A compositionally biased stretch (basic and acidic residues) spans 575 to 586 (DNTRKPIKDSDN). Cysteines 624 and 645 form a disulfide. N-linked (GlcNAc...) (complex) asparagine; alternate glycans are attached at residues N697 and N745. Residues N697 and N745 are each glycosylated (N-linked (GlcNAc...) (paucimannose) asparagine; alternate). Residues 756-761 (PIIEVW) form a necessary for prodomain cleavage and secretion region.

This sequence belongs to the peptidase S8 family. In terms of assembly, homodimer. Post-translationally, propeptide is internally cleaved at Asn-38 and Asp-52 in a pH-dependent manner leading to the dissociation of the propeptide from the catalytic domain and resulting in the release of the active subtilase. Cleavage occurs at pH 5.7 and to a stronger extent at pH 5.2. As to expression, expressed in flowers, cotyledons and leaves with the highest expression in roots.

It is found in the secreted. Inhibited by 1 mM 4-(2-aminoethyl)-benzenesulfonyl fluoride (AEBSF), a general inhibitor of serine proteinases, but not by the more selective serine protease inhibitors N-alpha-tosyl-L-lysinyl-chloromethylketone (TLCK), N-tosyl-L-phenylalaninyl-chloromethylketone (TPCK), leupeptin, aprotinin or benzamidine. Its proteolytic activity is autoinhibited by the non-covalent binding of the propeptide to the catalytic domain. No effect on activity by the addition of CaCl(2) or calcium chelators. Functionally, serine protease. Has preference for Gln in the P1 position and Lys in the P2 position of oligopeptide substrates. Active also with His in the P1 position. Involved in resistance against insects partly by regulating expression of systemic wound response genes and possibly by its post-ingestive activity in the insect gut. Apart from the role in defense, may be involved in regulation of pectin methylesterases (PMEs) activity and pectin methylesterification of the cell wall. The chain is Subtilisin-like protease SBT3 from Solanum lycopersicum (Tomato).